A 211-amino-acid polypeptide reads, in one-letter code: Thymidylate kinase (211 aa).

7–14 (GCEGSGKS) is an ATP binding site.

Belongs to the thymidylate kinase family.

The enzyme catalyses dTMP + ATP = dTDP + ADP. Phosphorylation of dTMP to form dTDP in both de novo and salvage pathways of dTTP synthesis. This is Thymidylate kinase from Chlamydia abortus (strain DSM 27085 / S26/3) (Chlamydophila abortus).